The following is a 557-amino-acid chain: Protein NRT1/ PTR FAMILY 2.6 (557 aa).

Transmembrane regions (helical) follow at residues 26–46 (ITFPFMIVTLFGLTLATLGWL), 67–87 (ILNIFSGFTFMFPAIGAIAAD), 89–109 (FFGTIPVILVSSFISLVGVVL), 136–156 (NIQLGVLYTAITLGCVGAGGL), 177–197 (FFNWFFFTWYLAASISATAIV), 203–223 (ISWSFGFGLCVAANLLGLIVF), 318–338 (IIPLVLAILFLSTPIAMQLGL), 356–376 (IPAGSLQVITLLSTCLFIIVN), 398–418 (VGIGHVFNILSMAVTAIVEAK), 439–459 (VLWLFPPLVIVGIGEAFHFPG), 478–498 (SITSVLIGICFYTSTALIDLI), and 518–538 (YWILVIGGVLNLGYFLVCSWF).

It belongs to the major facilitator superfamily. Proton-dependent oligopeptide transporter (POT/PTR) (TC 2.A.17) family. As to expression, expressed in roots.

The protein resides in the membrane. In terms of biological role, transporter involved in a passive nitrate efflux. The polypeptide is Protein NRT1/ PTR FAMILY 2.6 (NPF2.6) (Arabidopsis thaliana (Mouse-ear cress)).